The sequence spans 256 residues: Adenosine 5'-phosphosulfate reductase (256 aa).

Cysteine 120, cysteine 121, cysteine 203, and cysteine 206 together coordinate [4Fe-4S] cluster. Cysteine 231 serves as the catalytic Nucleophile; cysteine thiosulfonate intermediate.

This sequence belongs to the PAPS reductase family. CysH subfamily. The cofactor is [4Fe-4S] cluster.

It localises to the cytoplasm. The catalysed reaction is [thioredoxin]-disulfide + sulfite + AMP + 2 H(+) = adenosine 5'-phosphosulfate + [thioredoxin]-dithiol. Its pathway is sulfur metabolism; hydrogen sulfide biosynthesis; sulfite from sulfate. Catalyzes the formation of sulfite from adenosine 5'-phosphosulfate (APS) using thioredoxin as an electron donor. The polypeptide is Adenosine 5'-phosphosulfate reductase (Allochromatium vinosum (strain ATCC 17899 / DSM 180 / NBRC 103801 / NCIMB 10441 / D) (Chromatium vinosum)).